The primary structure comprises 322 residues: Ferrochelatase (322 aa).

Positions 194 and 275 each coordinate Fe cation.

Belongs to the ferrochelatase family.

Its subcellular location is the cytoplasm. It carries out the reaction heme b + 2 H(+) = protoporphyrin IX + Fe(2+). Its pathway is porphyrin-containing compound metabolism; protoheme biosynthesis; protoheme from protoporphyrin-IX: step 1/1. In terms of biological role, catalyzes the ferrous insertion into protoporphyrin IX. In Yersinia enterocolitica serotype O:8 / biotype 1B (strain NCTC 13174 / 8081), this protein is Ferrochelatase.